A 204-amino-acid chain; its full sequence is Peptide chain release factor homolog (204 aa).

An rRNA-recognition domain, N-terminus region spans residues 2–98 (ILLQLSSAQG…KNWFLGIGRF (97 aa)). Positions 99–107 (TADEQEQSD) are linker 1. The interval 108 to 161 (AIRYETLRSSGPGGQHVNKTDSAVRATHLASGISVKVQSERSQHANKRLARLLI) is GGQ domain. The GGQ motif motif lies at 120–122 (GGQ). The tract at residues 162–179 (AWKLEQQQQENSAALKSQ) is linker 2. The tract at residues 180–204 (RRMFHHQIERGNPRRTFTGMAFIEG) is rRNA-recognition domain, C-terminus.

This sequence belongs to the prokaryotic/mitochondrial release factor family. In terms of assembly, found in the A site of damaged 70S ribosomes, but not in undamaged ribosomes. Contacts (damaged) 16S rRNA, 23S rRNA and ribosomal protein uS12, but not mRNA.

In terms of biological role, peptide chain release-like factor that acts on 70S ribosomes with specific damage to their decoding center (cleavage of 16S rRNA between adenine-1493 and guanosine-1494, E.coli 16S rRNA numbering). Probably acts as a peptidyl-tRNA hydrolase, allowing release of the nascent chain and dissociation of the 30S and 50S subunits. Can release mRNA as short as 19 nucleotides (nt, mRNA-19, which has a single amino acid in the P-site and only a single nt in the A-site) from the ribosome. This specific cleavage is inflicted by CdiA (ECL_04451) or by colicin E3-type (ColE3) proteins. In vivo the PrfH-RtcB2 pair restores growth in the presence of ribotoxins that specifically create this damage. The polypeptide is Peptide chain release factor homolog (Escherichia coli (strain ATCC 25922 / DSM 1103 / LMG 8223 / NCIMB 12210 / NCTC 12241 / WDCM 00013 / Seattle 1946)).